We begin with the raw amino-acid sequence, 747 residues long: Asparagine synthetase [glutamine-hydrolyzing] 2 (747 aa).

Catalysis depends on Cys2, which acts as the For GATase activity. Positions 2-218 constitute a Glutamine amidotransferase type-2 domain; the sequence is CGLAGIINLA…AGHYLEINLT (217 aa). Residues 52–56, 77–79, and Asp100 contribute to the L-glutamine site; these read RLSIL and NGE. 395-396 provides a ligand contact to ATP; the sequence is SP.

This sequence belongs to the asparagine synthetase family.

The enzyme catalyses L-aspartate + L-glutamine + ATP + H2O = L-asparagine + L-glutamate + AMP + diphosphate + H(+). It functions in the pathway amino-acid biosynthesis; L-asparagine biosynthesis; L-asparagine from L-aspartate (L-Gln route): step 1/1. In Bacillus subtilis (strain 168), this protein is Asparagine synthetase [glutamine-hydrolyzing] 2 (asnH).